A 577-amino-acid polypeptide reads, in one-letter code: Arginine--tRNA ligase (577 aa).

The 'HIGH' region signature appears at 122-132 (PNVAKEMHVGH).

Belongs to the class-I aminoacyl-tRNA synthetase family. Monomer.

The protein resides in the cytoplasm. The catalysed reaction is tRNA(Arg) + L-arginine + ATP = L-arginyl-tRNA(Arg) + AMP + diphosphate. This Histophilus somni (strain 2336) (Haemophilus somnus) protein is Arginine--tRNA ligase.